Here is a 258-residue protein sequence, read N- to C-terminus: Imidazole glycerol phosphate synthase subunit HisF (258 aa).

Residues Asp-11 and Asp-130 contribute to the active site.

This sequence belongs to the HisA/HisF family. As to quaternary structure, heterodimer of HisH and HisF.

It is found in the cytoplasm. It catalyses the reaction 5-[(5-phospho-1-deoxy-D-ribulos-1-ylimino)methylamino]-1-(5-phospho-beta-D-ribosyl)imidazole-4-carboxamide + L-glutamine = D-erythro-1-(imidazol-4-yl)glycerol 3-phosphate + 5-amino-1-(5-phospho-beta-D-ribosyl)imidazole-4-carboxamide + L-glutamate + H(+). It participates in amino-acid biosynthesis; L-histidine biosynthesis; L-histidine from 5-phospho-alpha-D-ribose 1-diphosphate: step 5/9. Its function is as follows. IGPS catalyzes the conversion of PRFAR and glutamine to IGP, AICAR and glutamate. The HisF subunit catalyzes the cyclization activity that produces IGP and AICAR from PRFAR using the ammonia provided by the HisH subunit. The sequence is that of Imidazole glycerol phosphate synthase subunit HisF from Bradyrhizobium sp. (strain BTAi1 / ATCC BAA-1182).